The primary structure comprises 351 residues: Tetraacyldisaccharide 4'-kinase (351 aa).

61–68 (TAGGTGKT) contacts ATP.

This sequence belongs to the LpxK family.

The catalysed reaction is a lipid A disaccharide + ATP = a lipid IVA + ADP + H(+). Its pathway is glycolipid biosynthesis; lipid IV(A) biosynthesis; lipid IV(A) from (3R)-3-hydroxytetradecanoyl-[acyl-carrier-protein] and UDP-N-acetyl-alpha-D-glucosamine: step 6/6. In terms of biological role, transfers the gamma-phosphate of ATP to the 4'-position of a tetraacyldisaccharide 1-phosphate intermediate (termed DS-1-P) to form tetraacyldisaccharide 1,4'-bis-phosphate (lipid IVA). This Xanthomonas campestris pv. campestris (strain 8004) protein is Tetraacyldisaccharide 4'-kinase.